The sequence spans 303 residues: Hydroxyacylglutathione hydrolase, mitochondrial (303 aa).

His97, His99, Asp101, His102, His153, and Asp177 together coordinate Zn(2+). Residues 186-188, 216-218, and 292-295 each bind substrate; these read KFF, HEY, and RKEK. His216 serves as a coordination point for Zn(2+).

The protein belongs to the metallo-beta-lactamase superfamily. Glyoxalase II family. Monomer. Zn(2+) serves as cofactor.

It is found in the mitochondrion matrix. Its subcellular location is the cytoplasm. The enzyme catalyses an S-(2-hydroxyacyl)glutathione + H2O = a 2-hydroxy carboxylate + glutathione + H(+). It catalyses the reaction (R)-S-lactoylglutathione + H2O = (R)-lactate + glutathione + H(+). Its function is as follows. Thiolesterase that catalyzes the hydrolysis of S-D-lactoyl-glutathione to form glutathione and D-lactic acid. The polypeptide is Hydroxyacylglutathione hydrolase, mitochondrial (hagh) (Danio rerio (Zebrafish)).